The following is a 381-amino-acid chain: L-lactate dehydrogenase (381 aa).

In terms of domain architecture, FMN hydroxy acid dehydrogenase spans 1–380 (MIISSASDYR…KPEALVDLSK (380 aa)). Tyr-24 contacts substrate. Positions 106 and 127 each coordinate FMN. Tyr-129 contributes to the substrate binding site. Thr-155 contacts FMN. Position 164 (Arg-164) interacts with substrate. Position 251 (Lys-251) interacts with FMN. His-275 serves as the catalytic Proton acceptor. Arg-278 contributes to the substrate binding site. Residue 306 to 330 (DSGIRNGLDIVRMLALGADATMLGR) coordinates FMN.

Belongs to the FMN-dependent alpha-hydroxy acid dehydrogenase family. FMN is required as a cofactor.

It is found in the cell inner membrane. The catalysed reaction is (S)-lactate + A = pyruvate + AH2. Catalyzes the conversion of L-lactate to pyruvate. Is coupled to the respiratory chain. The chain is L-lactate dehydrogenase from Haemophilus influenzae (strain PittEE).